Consider the following 338-residue polypeptide: 1-aminocyclopropane-1-carboxylate deaminase (338 aa).

Residue Lys-51 is modified to N6-(pyridoxal phosphate)lysine. The active-site Nucleophile is the Ser-78.

Belongs to the ACC deaminase/D-cysteine desulfhydrase family. Homotrimer. Requires pyridoxal 5'-phosphate as cofactor.

It carries out the reaction 1-aminocyclopropane-1-carboxylate + H2O = 2-oxobutanoate + NH4(+). In terms of biological role, catalyzes a cyclopropane ring-opening reaction, the irreversible conversion of 1-aminocyclopropane-1-carboxylate (ACC) to ammonia and alpha-ketobutyrate. Allows growth on ACC as a nitrogen source. This chain is 1-aminocyclopropane-1-carboxylate deaminase, found in Methylibium petroleiphilum (strain ATCC BAA-1232 / LMG 22953 / PM1).